Reading from the N-terminus, the 200-residue chain is Large ribosomal subunit protein uL4 (200 aa).

The interval Thr-42–Gly-65 is disordered.

It belongs to the universal ribosomal protein uL4 family. Part of the 50S ribosomal subunit.

Its function is as follows. One of the primary rRNA binding proteins, this protein initially binds near the 5'-end of the 23S rRNA. It is important during the early stages of 50S assembly. It makes multiple contacts with different domains of the 23S rRNA in the assembled 50S subunit and ribosome. In terms of biological role, forms part of the polypeptide exit tunnel. This Vibrio atlanticus (strain LGP32) (Vibrio splendidus (strain Mel32)) protein is Large ribosomal subunit protein uL4.